We begin with the raw amino-acid sequence, 152 residues long: Protein eva-1 homolog A (152 aa).

The segment at 1-60 (MRLPLSHSPEHVEMALLSNILAAYSFVSENPERAALYFVSGVCIGLVLTLAALVIRISCH) is necessary for the localization and biological activity. A helical transmembrane segment spans residues 35-55 (ALYFVSGVCIGLVLTLAALVI). Residues 70–97 (KFLQDRESSSDSSDSEDGSEDTVSDLSV) are disordered. The span at 82 to 92 (SDSEDGSEDTV) shows a compositional bias: acidic residues. At Thr106 the chain carries Phosphothreonine. Ser114 bears the Phosphoserine; by FAM20C mark.

This sequence belongs to the EVA1 family. In terms of tissue distribution, expressed in lung, kidney, liver, pancreas, placenta, but not in heart and skeletal muscle.

The protein localises to the endoplasmic reticulum membrane. It is found in the lysosome membrane. In terms of biological role, acts as a regulator of programmed cell death, mediating both autophagy and apoptosis. The polypeptide is Protein eva-1 homolog A (EVA1A) (Homo sapiens (Human)).